Here is a 205-residue protein sequence, read N- to C-terminus: Small ribosomal subunit protein uS4c (205 aa).

The region spanning 93–154 is the S4 RNA-binding domain; sequence MRLDNTIFRL…RTQTIALIQQ (62 aa).

This sequence belongs to the universal ribosomal protein uS4 family. As to quaternary structure, part of the 30S ribosomal subunit. Contacts protein S5. The interaction surface between S4 and S5 is involved in control of translational fidelity.

The protein resides in the plastid. It is found in the chloroplast. Its function is as follows. One of the primary rRNA binding proteins, it binds directly to 16S rRNA where it nucleates assembly of the body of the 30S subunit. With S5 and S12 plays an important role in translational accuracy. The chain is Small ribosomal subunit protein uS4c (rps4) from Chaetosphaeridium globosum (Charophycean green alga).